Reading from the N-terminus, the 97-residue chain is Small ribosomal subunit protein bS6 (97 aa).

It belongs to the bacterial ribosomal protein bS6 family.

Its function is as follows. Binds together with bS18 to 16S ribosomal RNA. The protein is Small ribosomal subunit protein bS6 (rpsF) of Lactococcus lactis subsp. lactis (strain IL1403) (Streptococcus lactis).